Consider the following 137-residue polypeptide: Probable glycine cleavage system H protein 1 (137 aa).

A Lipoyl-binding domain is found at 31 to 113 (VAVIGITDYA…YGEGWIFKLK (83 aa)). At Lys-72 the chain carries N6-lipoyllysine.

The protein belongs to the GcvH family. In terms of assembly, the glycine cleavage system is composed of four proteins: P, T, L and H. Requires (R)-lipoate as cofactor.

Its function is as follows. The glycine cleavage system catalyzes the degradation of glycine. The H protein shuttles the methylamine group of glycine from the P protein to the T protein. This is Probable glycine cleavage system H protein 1 from Saccharolobus solfataricus (strain ATCC 35092 / DSM 1617 / JCM 11322 / P2) (Sulfolobus solfataricus).